The following is a 470-amino-acid chain: Histidine--tRNA ligase (470 aa).

It belongs to the class-II aminoacyl-tRNA synthetase family. As to quaternary structure, homodimer.

Its subcellular location is the cytoplasm. It carries out the reaction tRNA(His) + L-histidine + ATP = L-histidyl-tRNA(His) + AMP + diphosphate + H(+). The polypeptide is Histidine--tRNA ligase (Xanthomonas oryzae pv. oryzae (strain PXO99A)).